A 205-amino-acid polypeptide reads, in one-letter code: D-alanine--D-alanine ligase (205 aa).

In terms of domain architecture, ATP-grasp spans 111–205 (KHVLKSLGID…LGRAIGTMEF (95 aa)). 139–190 (MPYPFVIKPICGGSTIGVHAIFSRSEYLDLSVHADALEGRMLVEEYIPGQEV) serves as a coordination point for ATP.

Belongs to the D-alanine--D-alanine ligase family. Mg(2+) serves as cofactor. The cofactor is Mn(2+).

It is found in the cytoplasm. It carries out the reaction 2 D-alanine + ATP = D-alanyl-D-alanine + ADP + phosphate + H(+). Its pathway is cell wall biogenesis; peptidoglycan biosynthesis. In terms of biological role, cell wall formation. The polypeptide is D-alanine--D-alanine ligase (ddl) (Anaplasma centrale).